Here is a 341-residue protein sequence, read N- to C-terminus: Anthranilate phosphoribosyltransferase (341 aa).

Residues glycine 79, 82 to 83 (GD), threonine 87, 89 to 92 (NIST), 107 to 115 (KHGNRAVSS), and serine 119 contribute to the 5-phospho-alpha-D-ribose 1-diphosphate site. Glycine 79 is a binding site for anthranilate. Position 91 (serine 91) interacts with Mg(2+). Asparagine 110 lines the anthranilate pocket. Arginine 165 is a binding site for anthranilate. The Mg(2+) site is built by aspartate 224 and glutamate 225.

The protein belongs to the anthranilate phosphoribosyltransferase family. In terms of assembly, homodimer. Mg(2+) is required as a cofactor.

It carries out the reaction N-(5-phospho-beta-D-ribosyl)anthranilate + diphosphate = 5-phospho-alpha-D-ribose 1-diphosphate + anthranilate. It functions in the pathway amino-acid biosynthesis; L-tryptophan biosynthesis; L-tryptophan from chorismate: step 2/5. In terms of biological role, catalyzes the transfer of the phosphoribosyl group of 5-phosphorylribose-1-pyrophosphate (PRPP) to anthranilate to yield N-(5'-phosphoribosyl)-anthranilate (PRA). The polypeptide is Anthranilate phosphoribosyltransferase (Bacillus cereus (strain AH187)).